Consider the following 148-residue polypeptide: Cytochrome c6, chloroplastic (148 aa).

The N-terminal 58 residues, 1–58 (MLQLANRSVRAKAARASQSARSVSCAAAKRGADVAPLTSALAVTASILLTTGAASASA), are a transit peptide targeting the chloroplast. Residues C72, C75, H76, and M118 each contribute to the heme c site.

The protein belongs to the cytochrome c family. PetJ subfamily. In terms of assembly, thought to function as a monomer, however 2 crystal forms are observed; a homodimer and homotrimer, suggesting the protein oligomerizes. Post-translationally, binds 1 heme c group covalently per subunit.

It localises to the plastid. The protein resides in the chloroplast thylakoid lumen. Functionally, functions as an electron carrier between membrane-bound cytochrome b6-f and photosystem I in oxygenic photosynthesis. In Chlamydomonas reinhardtii (Chlamydomonas smithii), this protein is Cytochrome c6, chloroplastic (petJ).